The sequence spans 452 residues: Cholesterol 7-desaturase nvd 2 (452 aa).

Helical transmembrane passes span 6 to 26 (LIRI…MGLC) and 32 to 52 (FPVM…ALVM). In terms of domain architecture, Rieske spans 107–212 (WFKVADSTWI…CCEVDGMAYL (106 aa)). The [2Fe-2S] cluster site is built by Cys148, His150, Cys169, and His172.

Belongs to the cholesterol 7-desaturase family. It depends on [2Fe-2S] cluster as a cofactor.

It localises to the membrane. The catalysed reaction is cholesterol + NADPH + O2 + H(+) = 7-dehydrocholesterol + NADP(+) + 2 H2O. It carries out the reaction cholesterol + NADH + O2 + H(+) = 7-dehydrocholesterol + NAD(+) + 2 H2O. It functions in the pathway steroid hormone biosynthesis; dafachronic acid biosynthesis. Its function is as follows. Catalyzes the production of 7-dehydrocholesterol (7-DHC or cholesta-5,7-dien-3beta-ol) by inserting a double bond (desaturating) at the C7-C8 single bond of cholesterol. Essential regulator of steroid biosynthesis as this reaction is the first step in the synthesis of the steroid hormone Delta(7)-dafachronic acid. The chain is Cholesterol 7-desaturase nvd 2 from Ciona intestinalis (Transparent sea squirt).